The primary structure comprises 129 residues: Small ribosomal subunit protein uS11 (129 aa).

Belongs to the universal ribosomal protein uS11 family. Part of the 30S ribosomal subunit. Interacts with proteins S7 and S18. Binds to IF-3.

Its function is as follows. Located on the platform of the 30S subunit, it bridges several disparate RNA helices of the 16S rRNA. Forms part of the Shine-Dalgarno cleft in the 70S ribosome. This Psychrobacter arcticus (strain DSM 17307 / VKM B-2377 / 273-4) protein is Small ribosomal subunit protein uS11.